The primary structure comprises 318 residues: Homeobox protein Nkx-2.5 (318 aa).

Residues 137 to 196 constitute a DNA-binding region (homeobox); the sequence is RRKPRVLFSQAQVYELERRFKQQRYLSPAERDQLASVLKLTSTQVKIWFQNRRYKCKRQR.

Belongs to the NK-2 homeobox family. Homodimer (via the homeobox); binds DNA as homodimer. Interacts (via the homeobox) with TBX5 (via the T-box); this complex binds DNA. Interacts with HIPK1 and HIPK2, but not HIPK3. Interacts with the C-terminal zinc finger of GATA4 through its homeobox domain. Also interacts with JARID2 which represses its ability to activate transcription of ANF. Interacts with FBLIM1. Interacts with TBX18. Interacts with histone methyltransferase NSD2 (via HMG box). Interacts with NEDD9. Interacts with TBX1.

It is found in the nucleus. Transcription factor required for the development of the heart and the spleen. During heart development, acts as a transcriptional activator of NPPA/ANF in cooperation with GATA4. May cooperate with TBX2 to negatively modulate expression of NPPA/ANF in the atrioventricular canal. Binds to the core DNA motif of NPPA promoter. Together with PBX1, required for spleen development through a mechanism that involves CDKN2B repression. Positively regulates transcription of genes such as COL3A1 and MMP2, resulting in increased pulmonary endothelial fibrosis in response to hypoxia. The polypeptide is Homeobox protein Nkx-2.5 (Nkx2-5) (Rattus norvegicus (Rat)).